Consider the following 393-residue polypeptide: Acetate kinase (393 aa).

Asn7 contacts Mg(2+). ATP is bound at residue Lys14. Arg90 contacts substrate. Asp147 acts as the Proton donor/acceptor in catalysis. Residues 205–209 (HLGNG), 280–282 (DFR), and 328–332 (GIGEN) each bind ATP. Glu380 contributes to the Mg(2+) binding site.

This sequence belongs to the acetokinase family. Homodimer. The cofactor is Mg(2+). Mn(2+) is required as a cofactor.

Its subcellular location is the cytoplasm. It carries out the reaction acetate + ATP = acetyl phosphate + ADP. The protein operates within metabolic intermediate biosynthesis; acetyl-CoA biosynthesis; acetyl-CoA from acetate: step 1/2. Functionally, catalyzes the formation of acetyl phosphate from acetate and ATP. Can also catalyze the reverse reaction. This is Acetate kinase from Finegoldia magna (strain ATCC 29328 / DSM 20472 / WAL 2508) (Peptostreptococcus magnus).